The chain runs to 270 residues: Tryptophan synthase alpha chain (270 aa).

Catalysis depends on proton acceptor residues glutamate 60 and aspartate 71.

This sequence belongs to the TrpA family. In terms of assembly, tetramer of two alpha and two beta chains.

The enzyme catalyses (1S,2R)-1-C-(indol-3-yl)glycerol 3-phosphate + L-serine = D-glyceraldehyde 3-phosphate + L-tryptophan + H2O. The protein operates within amino-acid biosynthesis; L-tryptophan biosynthesis; L-tryptophan from chorismate: step 5/5. Functionally, the alpha subunit is responsible for the aldol cleavage of indoleglycerol phosphate to indole and glyceraldehyde 3-phosphate. The chain is Tryptophan synthase alpha chain from Deinococcus radiodurans (strain ATCC 13939 / DSM 20539 / JCM 16871 / CCUG 27074 / LMG 4051 / NBRC 15346 / NCIMB 9279 / VKM B-1422 / R1).